Here is a 283-residue protein sequence, read N- to C-terminus: 1-deoxypentalenic acid 11-beta-hydroxylase (283 aa).

Position 117 (Arg117) interacts with substrate. Residues His135 and Asp137 each coordinate Fe cation. 2-oxoglutarate contacts are provided by residues 135-137 (HQD) and Trp151. Arg186 contributes to the substrate binding site. His224 contacts Fe cation. 2-oxoglutarate-binding residues include Ser226 and Arg238. Residues 251-283 (HRGFNALTPWPESAKDASKGIMSKITGTPTTAE) form a disordered region.

This sequence belongs to the PhyH family. Fe cation serves as cofactor. Requires L-ascorbate as cofactor.

The catalysed reaction is 1-deoxypentalenate + 2-oxoglutarate + O2 = 1-deoxy-11beta-hydroxypentalenate + succinate + CO2. It functions in the pathway antibiotic biosynthesis; pentalenolactone biosynthesis. Functionally, catalyzes the conversion of 1-deoxypentalenic acid to 11-beta-hydroxy-1-deoxypentalenic acid in the biosynthesis of pentalenolactone antibiotic. This Streptomyces arenae protein is 1-deoxypentalenic acid 11-beta-hydroxylase (pntH).